The following is a 513-amino-acid chain: ATP synthase subunit alpha 2 (513 aa).

169–176 contacts ATP; that stretch reads GDRQVGKT.

Belongs to the ATPase alpha/beta chains family. In terms of assembly, F-type ATPases have 2 components, CF(1) - the catalytic core - and CF(0) - the membrane proton channel. CF(1) has five subunits: alpha(3), beta(3), gamma(1), delta(1), epsilon(1). CF(0) has three main subunits: a(1), b(2) and c(9-12). The alpha and beta chains form an alternating ring which encloses part of the gamma chain. CF(1) is attached to CF(0) by a central stalk formed by the gamma and epsilon chains, while a peripheral stalk is formed by the delta and b chains.

The protein localises to the cell inner membrane. It carries out the reaction ATP + H2O + 4 H(+)(in) = ADP + phosphate + 5 H(+)(out). In terms of biological role, produces ATP from ADP in the presence of a proton gradient across the membrane. The alpha chain is a regulatory subunit. This Psychromonas ingrahamii (strain DSM 17664 / CCUG 51855 / 37) protein is ATP synthase subunit alpha 2.